Reading from the N-terminus, the 246-residue chain is Type III pantothenate kinase (246 aa).

6-13 lines the ATP pocket; it reads DVGNTHSV. 103-106 is a substrate binding site; it reads GADR. The active-site Proton acceptor is aspartate 105. Aspartate 125 is a K(+) binding site. Threonine 128 contacts ATP. Threonine 179 serves as a coordination point for substrate.

The protein belongs to the type III pantothenate kinase family. In terms of assembly, homodimer. NH4(+) serves as cofactor. Requires K(+) as cofactor.

The protein localises to the cytoplasm. The enzyme catalyses (R)-pantothenate + ATP = (R)-4'-phosphopantothenate + ADP + H(+). Its pathway is cofactor biosynthesis; coenzyme A biosynthesis; CoA from (R)-pantothenate: step 1/5. Functionally, catalyzes the phosphorylation of pantothenate (Pan), the first step in CoA biosynthesis. The polypeptide is Type III pantothenate kinase (coaX) (Thermotoga maritima (strain ATCC 43589 / DSM 3109 / JCM 10099 / NBRC 100826 / MSB8)).